A 199-amino-acid chain; its full sequence is Nicotinamide riboside kinase 1 (199 aa).

10-18 (GVTNSGKTT) is a binding site for ATP. T17 and D36 together coordinate Mg(2+). D36 acts as the Proton acceptor in catalysis. Residues 36-39 (DDFF) and 55-56 (YD) contribute to the substrate site. R128 is an ATP binding site. Substrate-binding positions include R129 and 134–135 (YQ). Residues 132–134 (RVY) and 172–174 (KSE) contribute to the ATP site.

This sequence belongs to the uridine kinase family. NRK subfamily. As to quaternary structure, monomer.

It carries out the reaction beta-nicotinamide D-riboside + ATP = beta-nicotinamide D-ribonucleotide + ADP + H(+). The catalysed reaction is beta-D-ribosylnicotinate + ATP = nicotinate beta-D-ribonucleotide + ADP + H(+). The protein operates within cofactor biosynthesis; NAD(+) biosynthesis. Its function is as follows. Catalyzes the phosphorylation of nicotinamide riboside (NR) and nicotinic acid riboside (NaR) to form nicotinamide mononucleotide (NMN) and nicotinic acid mononucleotide (NaMN). The enzyme also phosphorylates the antitumor drugs tiazofurin and 3-deazaguanosine. This chain is Nicotinamide riboside kinase 1 (NMRK1), found in Homo sapiens (Human).